The chain runs to 293 residues: ELMO domain-containing protein 2 (293 aa).

The ELMO domain maps to 126–282 (QHEKLLIKLW…KFHEKIKGLL (157 aa)).

Functionally, acts as a GTPase-activating protein (GAP) toward guanine nucleotide exchange factors like ARL2, ARL3, ARF1 and ARF6, but not for GTPases outside the Arf family. This chain is ELMO domain-containing protein 2 (ELMOD2), found in Bos taurus (Bovine).